The sequence spans 533 residues: Glucose-6-phosphate isomerase (533 aa).

The active-site Proton donor is E341. Residues H372 and K501 contribute to the active site.

Belongs to the GPI family.

The protein resides in the cytoplasm. It carries out the reaction alpha-D-glucose 6-phosphate = beta-D-fructose 6-phosphate. It functions in the pathway carbohydrate biosynthesis; gluconeogenesis. It participates in carbohydrate degradation; glycolysis; D-glyceraldehyde 3-phosphate and glycerone phosphate from D-glucose: step 2/4. In terms of biological role, catalyzes the reversible isomerization of glucose-6-phosphate to fructose-6-phosphate. This Cereibacter sphaeroides (strain ATCC 17025 / ATH 2.4.3) (Rhodobacter sphaeroides) protein is Glucose-6-phosphate isomerase.